The primary structure comprises 370 residues: Glutamate 5-kinase (370 aa).

Residue K17 participates in ATP binding. Residues S56, D143, and N155 each contribute to the substrate site. Residue S175–D176 participates in ATP binding. Residues K280–P357 form the PUA domain.

It belongs to the glutamate 5-kinase family.

Its subcellular location is the cytoplasm. The catalysed reaction is L-glutamate + ATP = L-glutamyl 5-phosphate + ADP. The protein operates within amino-acid biosynthesis; L-proline biosynthesis; L-glutamate 5-semialdehyde from L-glutamate: step 1/2. Functionally, catalyzes the transfer of a phosphate group to glutamate to form L-glutamate 5-phosphate. The protein is Glutamate 5-kinase of Paracoccus denitrificans (strain Pd 1222).